A 38-amino-acid chain; its full sequence is Beta-galactosidase (38 aa).

This sequence belongs to the glycosyl hydrolase 35 family. As to quaternary structure, heterodimer of a large and a small subunit. In terms of processing, the small subunit is N-glycosylated.

The catalysed reaction is Hydrolysis of terminal non-reducing beta-D-galactose residues in beta-D-galactosides.. Involved in cell wall degradation. Degrades polysaccharides containing beta-(1--&gt;4)-linked galactans, acting as an exo-(1--&gt;4)-beta-D-galactanase. The protein is Beta-galactosidase of Hordeum vulgare (Barley).